The chain runs to 220 residues: Iron-sulfur cluster repair protein YtfE (220 aa).

Belongs to the RIC family. YtfE subfamily. As to quaternary structure, homodimer.

The protein localises to the cytoplasm. Di-iron-containing protein involved in the repair of iron-sulfur clusters damaged by oxidative and nitrosative stress conditions. This chain is Iron-sulfur cluster repair protein YtfE, found in Salmonella typhimurium (strain LT2 / SGSC1412 / ATCC 700720).